The chain runs to 148 residues: Putative anti-anti-sigma factor Rv2638 (148 aa).

In terms of domain architecture, STAS spans 30 to 141; sequence LRATTDGSGA…PTVDTALGKG (112 aa).

This sequence belongs to the anti-sigma-factor antagonist family. As to quaternary structure, interacts with unphosphorylated OprA.

The polypeptide is Putative anti-anti-sigma factor Rv2638 (Mycobacterium tuberculosis (strain ATCC 25618 / H37Rv)).